Here is a 161-residue protein sequence, read N- to C-terminus: SsrA-binding protein (161 aa).

This sequence belongs to the SmpB family.

Its subcellular location is the cytoplasm. In terms of biological role, required for rescue of stalled ribosomes mediated by trans-translation. Binds to transfer-messenger RNA (tmRNA), required for stable association of tmRNA with ribosomes. tmRNA and SmpB together mimic tRNA shape, replacing the anticodon stem-loop with SmpB. tmRNA is encoded by the ssrA gene; the 2 termini fold to resemble tRNA(Ala) and it encodes a 'tag peptide', a short internal open reading frame. During trans-translation Ala-aminoacylated tmRNA acts like a tRNA, entering the A-site of stalled ribosomes, displacing the stalled mRNA. The ribosome then switches to translate the ORF on the tmRNA; the nascent peptide is terminated with the 'tag peptide' encoded by the tmRNA and targeted for degradation. The ribosome is freed to recommence translation, which seems to be the essential function of trans-translation. The sequence is that of SsrA-binding protein from Mycolicibacterium smegmatis (strain ATCC 700084 / mc(2)155) (Mycobacterium smegmatis).